The chain runs to 212 residues: tRNA (guanine-N(7)-)-methyltransferase (212 aa).

S-adenosyl-L-methionine is bound by residues Glu44, Asp69, Asp96, and Asp118. Asp118 is a catalytic residue. Lys122 is a substrate binding site. The tract at residues 124–129 (RHEKRR) is interaction with RNA. Substrate-binding positions include Asp154 and 191 to 194 (TEYE).

Belongs to the class I-like SAM-binding methyltransferase superfamily. TrmB family.

It catalyses the reaction guanosine(46) in tRNA + S-adenosyl-L-methionine = N(7)-methylguanosine(46) in tRNA + S-adenosyl-L-homocysteine. The protein operates within tRNA modification; N(7)-methylguanine-tRNA biosynthesis. Catalyzes the formation of N(7)-methylguanine at position 46 (m7G46) in tRNA. The chain is tRNA (guanine-N(7)-)-methyltransferase from Streptococcus gordonii (strain Challis / ATCC 35105 / BCRC 15272 / CH1 / DL1 / V288).